The primary structure comprises 198 residues: Segregation and condensation protein B (198 aa).

The interval 168 to 198 (KLADPATDEPDQNEMDLFFDRFNQSKEQEEE) is disordered.

Belongs to the ScpB family. In terms of assembly, homodimer. Homodimerization may be required to stabilize the binding of ScpA to the Smc head domains. Component of a cohesin-like complex composed of ScpA, ScpB and the Smc homodimer, in which ScpA and ScpB bind to the head domain of Smc. The presence of the three proteins is required for the association of the complex with DNA.

Its subcellular location is the cytoplasm. Participates in chromosomal partition during cell division. May act via the formation of a condensin-like complex containing Smc and ScpA that pull DNA away from mid-cell into both cell halves. The protein is Segregation and condensation protein B of Listeria monocytogenes serovar 1/2a (strain ATCC BAA-679 / EGD-e).